The chain runs to 301 residues: Recombination-associated protein RdgC (301 aa).

Belongs to the RdgC family.

The protein localises to the cytoplasm. Its subcellular location is the nucleoid. Its function is as follows. May be involved in recombination. The protein is Recombination-associated protein RdgC of Stenotrophomonas maltophilia (strain R551-3).